The chain runs to 176 residues: Imidazoleglycerol-phosphate dehydratase (176 aa).

Belongs to the imidazoleglycerol-phosphate dehydratase family.

The protein localises to the cytoplasm. It carries out the reaction D-erythro-1-(imidazol-4-yl)glycerol 3-phosphate = 3-(imidazol-4-yl)-2-oxopropyl phosphate + H2O. The protein operates within amino-acid biosynthesis; L-histidine biosynthesis; L-histidine from 5-phospho-alpha-D-ribose 1-diphosphate: step 6/9. In Pyrococcus furiosus (strain ATCC 43587 / DSM 3638 / JCM 8422 / Vc1), this protein is Imidazoleglycerol-phosphate dehydratase.